The chain runs to 250 residues: Proteasome subunit alpha type-8 (250 aa).

Belongs to the peptidase T1A family. In terms of assembly, component of the outer alpha-ring of the 20S proteasome core which is composed of 28 subunits that are arranged in four stacked rings, resulting in a barrel-shaped structure. The catalytic chamber with the active sites is on the inside of the barrel. Interacts with canonical subunits of the spermatoproteasome, including proteasome activators PSME4 (also called PA200) and PSME3 (also called PA28-gamma). Interacts with proteasome-interacting proteins chaperones including CCT6B and CCT2, ubiquitin ligases (TRIP12, NEDD4, TRIM36 and RAD18), and ubiquitin specific proteases such as USP9X, USP34, USP5 and USP47. Interacts with meiotic proteins cyclin dependent kinase CDK1 and the ATPase TRIP13 as well as proteins of the synaptonemal complex SIX6OS1 and SYCE3.

It is found in the nucleus. Its function is as follows. Component of the spermatoproteasome, a proteasome specifically found in testis that promotes acetylation-dependent degradation of histones, thereby participating actively to the exchange of histones during spermatogenesis. The proteasome is a protein complex that degrades unneeded or damaged proteins by proteolysis, a chemical reaction that breaks peptide bonds. Required for 20S core proteasome assembly, essential for the degradation of meiotic proteins RAD51 and RPA1 at late prophase I and the progression of meiosis I during spermatogenesis. Localizes to the synaptonemal complex, a 'zipper'-like structure that holds homologous chromosome pairs in synapsis during meiotic prophase I. The chain is Proteasome subunit alpha type-8 from Mus musculus (Mouse).